Reading from the N-terminus, the 114-residue chain is Large ribosomal subunit protein bL17 (114 aa).

Belongs to the bacterial ribosomal protein bL17 family. Part of the 50S ribosomal subunit. Contacts protein L32.

This is Large ribosomal subunit protein bL17 from Clostridium acetobutylicum (strain ATCC 824 / DSM 792 / JCM 1419 / IAM 19013 / LMG 5710 / NBRC 13948 / NRRL B-527 / VKM B-1787 / 2291 / W).